The primary structure comprises 205 residues: Colicin-E8 (205 aa).

Disordered regions lie at residues 24–109 and 136–187; these read AQTD…PDRI and PELS…VYDM. Composition is skewed to basic and acidic residues over residues 53 to 76, 88 to 99, and 159 to 178; these read QERR…ESKR, PVGDKWLDDAGK, and RNKD…DKPI. Positions 173, 198, and 202 each coordinate Zn(2+).

The protein belongs to the colicin/pyosin nuclease family.

Functionally, this plasmid-coded bactericidal protein is an endonuclease active on both single- and double-stranded DNA but with undefined specificity. In terms of biological role, colicins are polypeptide toxins produced by and active against E.coli and closely related bacteria. The protein is Colicin-E8 (col) of Escherichia coli.